Reading from the N-terminus, the 214-residue chain is Adenylate kinase (214 aa).

Residue 10–15 participates in ATP binding; that stretch reads GAGKGT. The segment at 30-59 is NMP; it reads STGDMLRAAVKAGTPLGLEAKKVMDAGQLV. AMP is bound by residues T31, R36, 57-59, 85-88, and Q92; these read QLV and GFPR. The interval 122–159 is LID; that stretch reads GRRVHSGSGRVYHVVFNPPKVEGKDDVTGEDLSIRPDD. Residues R123 and 132–133 contribute to the ATP site; that span reads VY. Positions 156 and 167 each coordinate AMP. Q200 contacts ATP.

It belongs to the adenylate kinase family. In terms of assembly, monomer.

Its subcellular location is the cytoplasm. It carries out the reaction AMP + ATP = 2 ADP. It functions in the pathway purine metabolism; AMP biosynthesis via salvage pathway; AMP from ADP: step 1/1. Catalyzes the reversible transfer of the terminal phosphate group between ATP and AMP. Plays an important role in cellular energy homeostasis and in adenine nucleotide metabolism. This Shewanella frigidimarina (strain NCIMB 400) protein is Adenylate kinase.